The sequence spans 187 residues: Phosphatidylethanolamine-binding protein 1 (187 aa).

Residue Ala-2 is modified to N-acetylalanine; in peptide hippocampal cholinergic neurostimulating. A Phosphoserine modification is found at Ser-6. A Phosphothreonine modification is found at Thr-42. Residues Ser-51, Ser-52, Ser-54, Ser-98, and Ser-132 each carry the phosphoserine modification. Residues 93 to 134 (KGNDISSGTVLSDYVGSGPPSGTGLHRYVWLVYEQEQPLSCD) form an interaction with RAF1 region.

Belongs to the phosphatidylethanolamine-binding protein family. Has a tendency to form dimers by disulfide cross-linking. Interacts with RAF1 and this interaction is enhanced if RAF1 is phosphorylated on residues 'Ser-338', 'Ser-339', 'Tyr-340' and 'Tyr-341'. Interacts with ALOX15; in response to IL13/interleukin-13, prevents the interaction of PEBP1 with RAF1 to activate the ERK signaling cascade. As to expression, HCNP is expressed in brain. Increased expression in aged senescence-accelerated mice.

The protein localises to the cytoplasm. In terms of biological role, binds ATP, opioids and phosphatidylethanolamine. Has lower affinity for phosphatidylinositol and phosphatidylcholine. Serine protease inhibitor which inhibits thrombin, neuropsin and chymotrypsin but not trypsin, tissue type plasminogen activator and elastase. Inhibits the kinase activity of RAF1 by inhibiting its activation and by dissociating the RAF1/MEK complex and acting as a competitive inhibitor of MEK phosphorylation. Functionally, HCNP may be involved in the function of the presynaptic cholinergic neurons of the central nervous system. HCNP increases the production of choline acetyltransferase but not acetylcholinesterase. Seems to be mediated by a specific receptor. This chain is Phosphatidylethanolamine-binding protein 1 (Pebp1), found in Mus musculus (Mouse).